The sequence spans 486 residues: Cardiolipin synthase A (486 aa).

The next 2 helical transmembrane spans lie at 3 to 23 and 38 to 58; these read TFYT…IAGV and MAWL…YLSV. 2 consecutive PLD phosphodiesterase domains span residues 219–246 and 399–426; these read MDLR…VDPR and EGGL…DMRS. Residues His224, Lys226, Asp231, His404, Lys406, and Asp411 contribute to the active site.

It belongs to the phospholipase D family. Cardiolipin synthase subfamily. ClsA sub-subfamily.

Its subcellular location is the cell inner membrane. The catalysed reaction is 2 a 1,2-diacyl-sn-glycero-3-phospho-(1'-sn-glycerol) = a cardiolipin + glycerol. Functionally, catalyzes the reversible phosphatidyl group transfer from one phosphatidylglycerol molecule to another to form cardiolipin (CL) (diphosphatidylglycerol) and glycerol. This Salmonella arizonae (strain ATCC BAA-731 / CDC346-86 / RSK2980) protein is Cardiolipin synthase A.